The sequence spans 55 residues: Major pollen allergen Dac g 4 (55 aa).

The protein is Major pollen allergen Dac g 4 of Dactylis glomerata (Orchard grass).